Reading from the N-terminus, the 396-residue chain is MFDLFPIHGGVCAPEGFSADGIAAGLKKEGKLDVAFVHSLFPAKVSALFTTNRFAAAPIRYFQGLGEVFDCNFVLINAKNANAMTGAEGIEDIEWLMERLKHRFPSLVNPVMSSTGVIGARLPKEKIEASLGEIVLGKKEGARAAQAIMTTDAFSKEVAFKVELPDGRSFCIGAMAKGAGMIDPAMATMLCFITTDADVPENRMKELLQKAVHTTFNAISVDGDTSTNDTVMLFSNKASGVYEEEAFLMALERVMHKLATDVARDGEGAKKLVAFEVSGAASEEEAIKAAKALTTSLLVKTAIFGEDPNWGRIASTIGSSGVECDENRLRISFGEVLVYDRGAILFDKTIEEKAASVMRQESFKIHCDLGIGRGKFTAYGCDLGYEYVKINADYRT.

T150, K177, T188, E267, N391, and T396 together coordinate substrate. The active-site Nucleophile is T188.

This sequence belongs to the ArgJ family. As to quaternary structure, heterotetramer of two alpha and two beta chains.

It localises to the cytoplasm. The catalysed reaction is N(2)-acetyl-L-ornithine + L-glutamate = N-acetyl-L-glutamate + L-ornithine. The enzyme catalyses L-glutamate + acetyl-CoA = N-acetyl-L-glutamate + CoA + H(+). It functions in the pathway amino-acid biosynthesis; L-arginine biosynthesis; L-ornithine and N-acetyl-L-glutamate from L-glutamate and N(2)-acetyl-L-ornithine (cyclic): step 1/1. The protein operates within amino-acid biosynthesis; L-arginine biosynthesis; N(2)-acetyl-L-ornithine from L-glutamate: step 1/4. Its function is as follows. Catalyzes two activities which are involved in the cyclic version of arginine biosynthesis: the synthesis of N-acetylglutamate from glutamate and acetyl-CoA as the acetyl donor, and of ornithine by transacetylation between N(2)-acetylornithine and glutamate. This Wolinella succinogenes (strain ATCC 29543 / DSM 1740 / CCUG 13145 / JCM 31913 / LMG 7466 / NCTC 11488 / FDC 602W) (Vibrio succinogenes) protein is Arginine biosynthesis bifunctional protein ArgJ.